Here is a 296-residue protein sequence, read N- to C-terminus: Formamidopyrimidine-DNA glycosylase (296 aa).

Pro-2 (schiff-base intermediate with DNA) is an active-site residue. The Proton donor role is filled by Glu-3. Lys-58 acts as the Proton donor; for beta-elimination activity in catalysis. Residues His-104, Arg-126, and Lys-169 each coordinate DNA. An FPG-type zinc finger spans residues 260–296; sequence SVYDRESQACRTPGCGGTVARIVQAGRSTFYCATCQK. The active-site Proton donor; for delta-elimination activity is Arg-286.

It belongs to the FPG family. As to quaternary structure, monomer. The cofactor is Zn(2+).

It catalyses the reaction Hydrolysis of DNA containing ring-opened 7-methylguanine residues, releasing 2,6-diamino-4-hydroxy-5-(N-methyl)formamidopyrimidine.. It carries out the reaction 2'-deoxyribonucleotide-(2'-deoxyribose 5'-phosphate)-2'-deoxyribonucleotide-DNA = a 3'-end 2'-deoxyribonucleotide-(2,3-dehydro-2,3-deoxyribose 5'-phosphate)-DNA + a 5'-end 5'-phospho-2'-deoxyribonucleoside-DNA + H(+). Its function is as follows. Involved in base excision repair of DNA damaged by oxidation or by mutagenic agents. Acts as a DNA glycosylase that recognizes and removes damaged bases. Has a preference for oxidized purines, such as 7,8-dihydro-8-oxoguanine (8-oxoG). Has AP (apurinic/apyrimidinic) lyase activity and introduces nicks in the DNA strand. Cleaves the DNA backbone by beta-delta elimination to generate a single-strand break at the site of the removed base with both 3'- and 5'-phosphates. In Rhizobium johnstonii (strain DSM 114642 / LMG 32736 / 3841) (Rhizobium leguminosarum bv. viciae), this protein is Formamidopyrimidine-DNA glycosylase.